The following is a 123-amino-acid chain: Large ribosomal subunit protein bL20 (123 aa).

It belongs to the bacterial ribosomal protein bL20 family.

Binds directly to 23S ribosomal RNA and is necessary for the in vitro assembly process of the 50S ribosomal subunit. It is not involved in the protein synthesizing functions of that subunit. The protein is Large ribosomal subunit protein bL20 (rplT) of Chlamydia trachomatis serovar D (strain ATCC VR-885 / DSM 19411 / UW-3/Cx).